Consider the following 459-residue polypeptide: Methionine aminopeptidase 2-1 (459 aa).

Residues 1–12 show a composition bias toward basic and acidic residues; sequence MGSKSPEDHRQG. A disordered region spans residues 1–79; sequence MGSKSPEDHR…RKRNKKKSKK (79 aa). The span at 43–54 shows a compositional bias: acidic residues; that stretch reads GQDEDGDDDDDE. Residues 67-79 show a composition bias toward basic residues; that stretch reads KKKRKRNKKKSKK. His-210 lines the substrate pocket. Asp-231, Asp-242, and His-311 together coordinate a divalent metal cation. His-319 provides a ligand contact to substrate. 2 residues coordinate a divalent metal cation: Glu-344 and Glu-440.

This sequence belongs to the peptidase M24A family. Methionine aminopeptidase eukaryotic type 2 subfamily. Co(2+) serves as cofactor. Requires Zn(2+) as cofactor. Mn(2+) is required as a cofactor. It depends on Fe(2+) as a cofactor.

Its subcellular location is the cytoplasm. It carries out the reaction Release of N-terminal amino acids, preferentially methionine, from peptides and arylamides.. In terms of biological role, cotranslationally removes the N-terminal methionine from nascent proteins. The N-terminal methionine is often cleaved when the second residue in the primary sequence is small and uncharged (Met-Ala-, Cys, Gly, Pro, Ser, Thr, or Val). The chain is Methionine aminopeptidase 2-1 from Pyrenophora tritici-repentis (strain Pt-1C-BFP) (Wheat tan spot fungus).